The primary structure comprises 216 residues: Acyl-homoserine-lactone synthase (216 aa).

This sequence belongs to the autoinducer synthase family.

It catalyses the reaction a fatty acyl-[ACP] + S-adenosyl-L-methionine = an N-acyl-L-homoserine lactone + S-methyl-5'-thioadenosine + holo-[ACP] + H(+). Functionally, required for the synthesis of OHHL (N-(3-oxohexanoyl)-L-homoserine lactone), an autoinducer molecule which binds to CarR and thus acts in the control of the biosynthesis of carbapenem antibiotics. In Pectobacterium carotovorum subsp. carotovorum (Erwinia carotovora subsp. carotovora), this protein is Acyl-homoserine-lactone synthase (carI).